We begin with the raw amino-acid sequence, 499 residues long: Glycerol kinase (499 aa).

Threonine 13 lines the ADP pocket. The ATP site is built by threonine 13, threonine 14, and serine 15. Sn-glycerol 3-phosphate is bound at residue threonine 13. Arginine 17 contacts ADP. 4 residues coordinate sn-glycerol 3-phosphate: arginine 83, glutamate 84, tyrosine 135, and aspartate 245. Arginine 83, glutamate 84, tyrosine 135, aspartate 245, and glutamine 246 together coordinate glycerol. ADP contacts are provided by threonine 267 and glycine 310. 4 residues coordinate ATP: threonine 267, glycine 310, glutamine 314, and alanine 411. ADP-binding residues include alanine 411 and asparagine 415.

The protein belongs to the FGGY kinase family.

The catalysed reaction is glycerol + ATP = sn-glycerol 3-phosphate + ADP + H(+). It functions in the pathway polyol metabolism; glycerol degradation via glycerol kinase pathway; sn-glycerol 3-phosphate from glycerol: step 1/1. Inhibited by fructose 1,6-bisphosphate (FBP). Its function is as follows. Key enzyme in the regulation of glycerol uptake and metabolism. Catalyzes the phosphorylation of glycerol to yield sn-glycerol 3-phosphate. This is Glycerol kinase from Xylella fastidiosa (strain M23).